Reading from the N-terminus, the 156-residue chain is ATP synthase subunit b (156 aa).

A helical transmembrane segment spans residues 5 to 25 (VTLIGQTVAFIIFVWFCMKFV).

It belongs to the ATPase B chain family. In terms of assembly, F-type ATPases have 2 components, F(1) - the catalytic core - and F(0) - the membrane proton channel. F(1) has five subunits: alpha(3), beta(3), gamma(1), delta(1), epsilon(1). F(0) has three main subunits: a(1), b(2) and c(10-14). The alpha and beta chains form an alternating ring which encloses part of the gamma chain. F(1) is attached to F(0) by a central stalk formed by the gamma and epsilon chains, while a peripheral stalk is formed by the delta and b chains.

It is found in the cell inner membrane. F(1)F(0) ATP synthase produces ATP from ADP in the presence of a proton or sodium gradient. F-type ATPases consist of two structural domains, F(1) containing the extramembraneous catalytic core and F(0) containing the membrane proton channel, linked together by a central stalk and a peripheral stalk. During catalysis, ATP synthesis in the catalytic domain of F(1) is coupled via a rotary mechanism of the central stalk subunits to proton translocation. Functionally, component of the F(0) channel, it forms part of the peripheral stalk, linking F(1) to F(0). The sequence is that of ATP synthase subunit b from Shewanella loihica (strain ATCC BAA-1088 / PV-4).